The following is a 250-amino-acid chain: 2,3-bisphosphoglycerate-dependent phosphoglycerate mutase (250 aa).

Residues 8-15 (RHGESQWN), 21-22 (TG), R60, 87-90 (ERHY), K98, 114-115 (RR), and 183-184 (GN) each bind substrate. The active-site Tele-phosphohistidine intermediate is H9. Residue E87 is the Proton donor/acceptor of the active site.

It belongs to the phosphoglycerate mutase family. BPG-dependent PGAM subfamily. Homodimer.

The enzyme catalyses (2R)-2-phosphoglycerate = (2R)-3-phosphoglycerate. It functions in the pathway carbohydrate degradation; glycolysis; pyruvate from D-glyceraldehyde 3-phosphate: step 3/5. Its function is as follows. Catalyzes the interconversion of 2-phosphoglycerate and 3-phosphoglycerate. The chain is 2,3-bisphosphoglycerate-dependent phosphoglycerate mutase from Bordetella parapertussis (strain 12822 / ATCC BAA-587 / NCTC 13253).